Here is a 210-residue protein sequence, read N- to C-terminus: SAP domain-containing ribonucleoprotein (210 aa).

N-acetylalanine is present on Ala2. Residues 8–42 (LHKLKLAELKQECLARGLETKGIKQDLIHRLQAYL) enclose the SAP domain. Position 10 is an N6-acetyllysine (Lys10). The segment covering 45-64 (HAEEEANEEDVLGDETEEEE) has biased composition (acidic residues). The segment at 45–86 (HAEEEANEEDVLGDETEEEETKPIELPVKEEEPPEKTVDVAA) is disordered. Positions 65–86 (TKPIELPVKEEEPPEKTVDVAA) are enriched in basic and acidic residues. Lys142 is subject to N6-acetyllysine. Residues 161 to 210 (VSSISRKSEDDEKLKKRKERFGIVTSSAGTGTTEDTEAKKRKRAERFGIA) are disordered. Position 163 is a phosphoserine (Ser163). Polar residues predominate over residues 184 to 193 (VTSSAGTGTT).

This sequence belongs to the SAP domain-containing ribonucleoprotein family. In terms of assembly, interacts with DDX39A. Interacts with FUS. Interacts (via the C-terminal domain) with DDX39B; the interaction is direct and facilitates RNA binding of DDX39B. Component of the transcription/export (TREX) complex at least composed of ALYREF/THOC4, DDX39B, SARNP/CIP29, CHTOP and the THO subcomplex; TREX seems to have dynamic structure involving ATP-dependent remodeling; in the complex interacts directly with DDX39B in a ATP-dependent manner which bridges it to ALYREF/THOC4. In terms of tissue distribution, low expression in spleen, liver, pancreas, testis, thymus, heart, and kidney. Increased levels are seen in hepatocellular carcinoma and pancreatic adenocarcinoma.

It is found in the nucleus. The protein resides in the nucleus speckle. In terms of biological role, binds both single-stranded and double-stranded DNA with higher affinity for the single-stranded form. Specifically binds to scaffold/matrix attachment region DNA. Also binds single-stranded RNA. Enhances RNA unwinding activity of DDX39A. May participate in important transcriptional or translational control of cell growth, metabolism and carcinogenesis. Component of the TREX complex which is thought to couple mRNA transcription, processing and nuclear export, and specifically associates with spliced mRNA and not with unspliced pre-mRNA. The TREX complex is recruited to spliced mRNAs by a transcription-independent mechanism, binds to mRNA upstream of the exon-junction complex (EJC) and is recruited in a splicing- and cap-dependent manner to a region near the 5' end of the mRNA where it functions in mRNA export to the cytoplasm via the TAP/NXF1 pathway. Associates with DDX39B, which facilitates RNA binding of DDX39B and likely plays a role in mRNA export. The protein is SAP domain-containing ribonucleoprotein (SARNP) of Homo sapiens (Human).